Consider the following 799-residue polypeptide: Histidine biosynthesis trifunctional protein (799 aa).

The interval 1-229 (MVLPILPLID…FIVEQENVGF (229 aa)) is phosphoribosyl-AMP cyclohydrolase. Residues 230 to 312 (CHLETMSCFG…FYFALAKLVT (83 aa)) are phosphoribosyl-ATP pyrophosphohydrolase. Positions 313-799 (NNVSLKDVEN…KLGLIPKDFQ (487 aa)) are histidinol dehydrogenase. 2 residues coordinate Zn(2+): Q618 and H621. Residues E687 and H688 contribute to the active site. Zn(2+) contacts are provided by D721 and H780.

This sequence in the C-terminal section; belongs to the histidinol dehydrogenase family. Zn(2+) serves as cofactor.

It catalyses the reaction 1-(5-phospho-beta-D-ribosyl)-5'-AMP + H2O = 1-(5-phospho-beta-D-ribosyl)-5-[(5-phospho-beta-D-ribosylamino)methylideneamino]imidazole-4-carboxamide. The catalysed reaction is 1-(5-phospho-beta-D-ribosyl)-ATP + H2O = 1-(5-phospho-beta-D-ribosyl)-5'-AMP + diphosphate + H(+). The enzyme catalyses L-histidinol + 2 NAD(+) + H2O = L-histidine + 2 NADH + 3 H(+). The protein operates within amino-acid biosynthesis; L-histidine biosynthesis; L-histidine from 5-phospho-alpha-D-ribose 1-diphosphate: step 2/9. Its pathway is amino-acid biosynthesis; L-histidine biosynthesis; L-histidine from 5-phospho-alpha-D-ribose 1-diphosphate: step 3/9. It participates in amino-acid biosynthesis; L-histidine biosynthesis; L-histidine from 5-phospho-alpha-D-ribose 1-diphosphate: step 9/9. In Saccharomyces bayanus (Yeast), this protein is Histidine biosynthesis trifunctional protein (HIS4).